The chain runs to 443 residues: Tol-Pal system protein TolB (443 aa).

The first 31 residues, 1 to 31 (MMIMTTRTFFSWFIVICAFWLTSFSSVPVHA), serve as a signal peptide directing secretion. The tract at residues 422–443 (ERQLPTPNDASDPAWSPLLNIQ) is disordered.

The protein belongs to the TolB family. In terms of assembly, the Tol-Pal system is composed of five core proteins: the inner membrane proteins TolA, TolQ and TolR, the periplasmic protein TolB and the outer membrane protein Pal. They form a network linking the inner and outer membranes and the peptidoglycan layer.

It is found in the periplasm. Part of the Tol-Pal system, which plays a role in outer membrane invagination during cell division and is important for maintaining outer membrane integrity. The chain is Tol-Pal system protein TolB from Bartonella henselae (strain ATCC 49882 / DSM 28221 / CCUG 30454 / Houston 1) (Rochalimaea henselae).